Consider the following 339-residue polypeptide: Putative adenosine/adenine deaminase (339 aa).

Residues His16, His18, and His200 each contribute to the Zn(2+) site. His18 is a substrate binding site. Glu203 functions as the Proton donor in the catalytic mechanism. Asp281 contributes to the Zn(2+) binding site. Asp282 is a binding site for substrate.

The protein belongs to the metallo-dependent hydrolases superfamily. Adenosine and AMP deaminases family. Zn(2+) serves as cofactor.

Its function is as follows. Putative nucleoside deaminase. May catalyze the hydrolytic deamination of adenosine or some similar substrate and play a role in purine metabolism. The sequence is that of Putative adenosine/adenine deaminase from Streptomyces virginiae (Streptomyces cinnamonensis).